The chain runs to 321 residues: Epoxyqueuosine reductase (321 aa).

Aspartate 137 (proton donor) is an active-site residue. Positions 179-211 constitute a 4Fe-4S ferredoxin-type domain; it reads EPLNADPPARSLCGRCSACIDACPTHAIREPFV. Residues cysteine 191, cysteine 194, cysteine 197, cysteine 201, cysteine 217, cysteine 245, cysteine 248, and cysteine 252 each contribute to the [4Fe-4S] cluster site.

The protein belongs to the QueG family. Monomer. Cob(II)alamin serves as cofactor. Requires [4Fe-4S] cluster as cofactor.

Its subcellular location is the cytoplasm. The catalysed reaction is epoxyqueuosine(34) in tRNA + AH2 = queuosine(34) in tRNA + A + H2O. It functions in the pathway tRNA modification; tRNA-queuosine biosynthesis. Functionally, catalyzes the conversion of epoxyqueuosine (oQ) to queuosine (Q), which is a hypermodified base found in the wobble positions of tRNA(Asp), tRNA(Asn), tRNA(His) and tRNA(Tyr). This chain is Epoxyqueuosine reductase, found in Synechococcus sp. (strain CC9605).